Reading from the N-terminus, the 917-residue chain is PAX3- and PAX7-binding protein 1 (917 aa).

Basic residues predominate over residues 1 to 11; that stretch reads MFRKARRVNVR. Disordered regions lie at residues 1 to 123, 143 to 205, and 229 to 275; these read MFRK…FKVK, LEKS…GAFS, and RKKR…RIVF. Ser-16 carries the phosphoserine modification. Residues 16–28 show a composition bias toward acidic residues; sequence SEEEERERDEEQE. 2 stretches are compositionally biased toward gly residues: residues 40-50 and 73-85; these read EEAGPGGGDRA and AEAG…GAEP. Residue Lys-149 forms a Glycyl lysine isopeptide (Lys-Gly) (interchain with G-Cter in SUMO1); alternate linkage. Residue Lys-149 forms a Glycyl lysine isopeptide (Lys-Gly) (interchain with G-Cter in SUMO2); alternate linkage. Phosphoserine occurs at positions 154, 155, and 158. Over residues 161–172 the composition is skewed to basic and acidic residues; that stretch reads PLDKTGHVKDTN. Acidic residues predominate over residues 183–193; the sequence is GEDEMDMESEK. Phosphoserine is present on Ser-191. The span at 234–256 shows a compositional bias: basic and acidic residues; the sequence is MARELGDFTPHDNEPGKGRLVRE. Residues 257–268 show a composition bias toward acidic residues; that stretch reads DENDASDDEDDD. Phosphoserine is present on residues Ser-262 and Ser-295. Disordered stretches follow at residues 362-381 and 530-564; these read SSDA…TPSN and AERE…EETS. The tract at residues 378-558 is necessary and sufficient for interaction with PAX7; it reads TPSNEMTPVT…MADHLEGLSS (181 aa). Residues 542 to 554 show a composition bias toward basic and acidic residues; it reads AREQTGKMADHLE. Residues Ser-557 and Ser-558 each carry the phosphoserine modification. Thr-563 carries the phosphothreonine modification.

This sequence belongs to the GCF family. In terms of assembly, interacts with PAX3 and PAX7. Interacts with WDR5; associates with a histone methyltransferase (HMT) complex composed at least of RBBP5, ASH2L, SET1, SET2 and KMT2A/MLL1, KMT2D/MLL2, KMT2C/MLL3 and KMT2B/MLL4 through direct interaction with WDR5. In terms of tissue distribution, ubiquitous.

The protein localises to the nucleus. Its function is as follows. Adapter protein linking the transcription factors PAX3 and PAX7 to the histone methylation machinery and involved in myogenesis. Associates with a histone methyltransferase complex that specifically mediates dimethylation and trimethylation of 'Lys-4' of histone H3. Mediates the recruitment of that complex to the transcription factors PAX3 and PAX7 on chromatin to regulate the expression of genes involved in muscle progenitor cells proliferation including ID3 and CDC20. This is PAX3- and PAX7-binding protein 1 (PAXBP1) from Homo sapiens (Human).